The following is a 257-amino-acid chain: Nickel import system ATP-binding protein NikD (257 aa).

Residues 4-245 (IDIQNLTIKN…HLHPYTEQLI (242 aa)) form the ABC transporter domain. 37-44 (GESGAGKS) is a binding site for ATP.

This sequence belongs to the ABC transporter superfamily. In terms of assembly, the complex is composed of two ATP-binding proteins (NikD and NikE), two transmembrane proteins (NikB and NikC) and a solute-binding protein (NikA).

The protein resides in the cell membrane. It carries out the reaction Ni(2+)(out) + ATP + H2O = Ni(2+)(in) + ADP + phosphate + H(+). In terms of biological role, part of the ABC transporter complex NikABCDE (Opp2) involved in nickel import. Probably responsible for energy coupling to the transport system. The protein is Nickel import system ATP-binding protein NikD of Staphylococcus aureus (strain bovine RF122 / ET3-1).